The sequence spans 149 residues: Basic phospholipase A2 homolog MitTx-beta (149 aa).

The N-terminal stretch at 1–30 (MDKMNPAHLLVLAAVCVSLLGASSIPPQAL) is a signal peptide. 7 cysteine pairs are disulfide-bonded: Cys41-Cys100, Cys55-Cys148, Cys57-Cys73, Cys72-Cys130, Cys79-Cys123, Cys89-Cys116, and Cys109-Cys121.

This sequence belongs to the phospholipase A2 family. Group I subfamily. K49 sub-subfamily. As to quaternary structure, heterodimer of an alpha (Kunitz-type) and a beta (phospholipase A2 homolog) chains; non-covalently-linked. In terms of tissue distribution, expressed by the venom gland.

Its subcellular location is the secreted. Heterodimer: MitTx, a heteromeric complex between Kunitz- and phospholipase-A2-like proteins, potently, persistently and selectively activates rat and chicken acid-sensing ion channel ASIC1. Both alternatively spliced rat isoforms ASIC1a and ASIC1b are activated, with a higher potency for ASIC1a (EC(50)=9.4 nM) vs ASIC1b (EC(50)=23 nM). The rat ASIC3 subtype is also sensitive to the heterodimer, but with a lower potency (EC(50)=830 nM). On rat ASIC2a, the toxin shows a very weak activation, but produces a remarkable potentiation (&gt;100-fold) of protons when the extracellular pH drops below neutrality. Moderate and weak activations are also observed on the heterotrimers Asic1a-Asic2a and Asic1a-Asic3 (expressed in CHO cells), respectively. The binding sites of the beta subunit of MitTx and the spider psalmotoxin-1 toxin overlap, explaining why these toxins are mutually exclusive. In vivo, the heterodimer elicits robust pain-related behavior in mice by activation of ASIC1 channels on capsaicin-sensitive nerve fibers. Its function is as follows. Monomer: does not have phospholipase A2 activity but may maintain some lipid-binding character from its PLA2 lineage, which could aid in effecting neuronal depolarization. The chain is Basic phospholipase A2 homolog MitTx-beta from Micrurus tener tener (Texas coral snake).